The following is a 229-amino-acid chain: MPKEGKKLQEARKQFDKNTLYEPLEALEMVKKTATAKFDETVEVAFRLGVDPRHADQQLRGAVVLPHGTGKTKTVLVFAKGDKAKEAEAAGADFVGAEDMLEKIQGGWLGFDVAIATPDMMGTVGRLGRVLGPRGLMPNPKTGTVTFEVGDAVRDAKGGKITYRTDKVGIIHAPIGKASFDTQKLAENFKTLADTLVRIKPASAKGTYMKTITVSSTMGPGVRINPNKL.

This sequence belongs to the universal ribosomal protein uL1 family. Part of the 50S ribosomal subunit.

Its function is as follows. Binds directly to 23S rRNA. The L1 stalk is quite mobile in the ribosome, and is involved in E site tRNA release. Functionally, protein L1 is also a translational repressor protein, it controls the translation of the L11 operon by binding to its mRNA. The sequence is that of Large ribosomal subunit protein uL1 from Desulforamulus reducens (strain ATCC BAA-1160 / DSM 100696 / MI-1) (Desulfotomaculum reducens).